The sequence spans 319 residues: Large ribosomal subunit protein uL10 (319 aa).

The interval 286–319 (AGDSGASAAPKEEEKAAEPEEESDEEMGFSLFDD) is disordered. Acidic residues predominate over residues 304-319 (PEEESDEEMGFSLFDD).

This sequence belongs to the universal ribosomal protein uL10 family. As to quaternary structure, P0 forms a pentameric complex by interaction with dimers of P1 and P2. Post-translationally, phosphorylated.

Ribosomal protein P0 is the functional equivalent of E.coli protein L10. The chain is Large ribosomal subunit protein uL10 (RP-P0) from Zea mays (Maize).